The following is a 523-amino-acid chain: MTSHIDDNLWIIALTSKCTQENLAWVLLIMGSLWLTMTFYYWSHPGGPAWGKYYTYSPPLSIIPGPKGFPLIGSMGLMTSLAHHRIAAAAATCRAKRLMAFSLGDTRVIVTCHPDVAKEILNSSVFADRPVKESAYSLMFNRAIGFASYGVYWRSLRRIASNHLFCPRQIKASELQRSQIAAQMVHILNNKRHRSLRVRQVLKKASLSNMMCSVFGQEYKLHDPNSGMEDLGILVDQGYDLLGLFNWADHLPFLAHFDAQNIRFRCSNLVPMVNRFVGTIIAEHRASKTETNRDFVDVLLSLPEPDQLSDSDMIAVLWEMIFRGTDTVAVLIEWILARMALHPHVQSKVQEELDAVVGKARAVAEDDVAVMTYLPAVVKEVLRLHPPGPLLSWARLSINDTTIDGYHVPAGTTAMVNTWAICRDPHVWKDPLEFMPERFVTAGGDAEFSILGSDPRLAPFGSGRRACPGKTLGWATVNFWVASLLHEFEWVPSDEKGVDLTEVLKLSSEMANPLTVKVRPRRG.

Residue cysteine 467 coordinates heme.

Belongs to the cytochrome P450 family. Heme serves as cofactor.

The polypeptide is Cytochrome P450 78A3 (CYP78A3) (Glycine max (Soybean)).